A 463-amino-acid polypeptide reads, in one-letter code: Adenosylhomocysteinase (463 aa).

Thr-54, Asp-129, and Glu-189 together coordinate substrate. 190–192 (TTT) serves as a coordination point for NAD(+). Substrate contacts are provided by Lys-219 and Asp-223. Residues Asn-224, 253–258 (GYGDVG), Glu-276, Asn-311, 332–334 (IGH), and Asn-377 contribute to the NAD(+) site.

Belongs to the adenosylhomocysteinase family. Requires NAD(+) as cofactor.

It localises to the cytoplasm. It catalyses the reaction S-adenosyl-L-homocysteine + H2O = L-homocysteine + adenosine. Its pathway is amino-acid biosynthesis; L-homocysteine biosynthesis; L-homocysteine from S-adenosyl-L-homocysteine: step 1/1. In terms of biological role, may play a key role in the regulation of the intracellular concentration of adenosylhomocysteine. The sequence is that of Adenosylhomocysteinase from Caulobacter vibrioides (strain ATCC 19089 / CIP 103742 / CB 15) (Caulobacter crescentus).